The chain runs to 751 residues: Photosystem I P700 chlorophyll a apoprotein A1 (751 aa).

A run of 8 helical transmembrane segments spans residues Val73–Ala96, Leu159–His182, Leu198–Leu222, Thr294–Tyr312, Trp349–Tyr372, Leu388–Val414, Ala436–His458, and Phe533–Leu551. 2 residues coordinate [4Fe-4S] cluster: Cys575 and Cys584. 2 consecutive transmembrane segments (helical) span residues His591–Trp612 and Leu665–Phe687. His676 lines the chlorophyll a' pocket. Positions 684 and 692 each coordinate chlorophyll a. Trp693 is a phylloquinone binding site. Residues Ala725–Ala745 traverse the membrane as a helical segment.

This sequence belongs to the PsaA/PsaB family. As to quaternary structure, the PsaA/B heterodimer binds the P700 chlorophyll special pair and subsequent electron acceptors. PSI consists of a core antenna complex that captures photons, and an electron transfer chain that converts photonic excitation into a charge separation. The eukaryotic PSI reaction center is composed of at least 11 subunits. Requires P700 is a chlorophyll a/chlorophyll a' dimer, A0 is one or more chlorophyll a, A1 is one or both phylloquinones and FX is a shared 4Fe-4S iron-sulfur center. as cofactor.

It is found in the plastid. The protein localises to the chloroplast thylakoid membrane. The enzyme catalyses reduced [plastocyanin] + hnu + oxidized [2Fe-2S]-[ferredoxin] = oxidized [plastocyanin] + reduced [2Fe-2S]-[ferredoxin]. Its function is as follows. PsaA and PsaB bind P700, the primary electron donor of photosystem I (PSI), as well as the electron acceptors A0, A1 and FX. PSI is a plastocyanin/cytochrome c6-ferredoxin oxidoreductase, converting photonic excitation into a charge separation, which transfers an electron from the donor P700 chlorophyll pair to the spectroscopically characterized acceptors A0, A1, FX, FA and FB in turn. Oxidized P700 is reduced on the lumenal side of the thylakoid membrane by plastocyanin or cytochrome c6. In Chlorella vulgaris (Green alga), this protein is Photosystem I P700 chlorophyll a apoprotein A1.